The primary structure comprises 241 residues: Cell division cycle-associated protein 4 (241 aa).

Residues 30-77 enclose the SERTA domain; the sequence is YSLQRQSLLDMSLVKLQLCHMLVEPNLCRSVLIANTVRQIQEEMTQDG.

As to expression, highest levels of expression in the pancreas, thymus, testis, spleen, liver, placenta and leukocytes. Relatively low levels in the lung, kidney, prostate, ovary, small intestine and colon. Hardly detectable, if at all, in the brain, skeletal muscle and heart.

It is found in the nucleus. Its function is as follows. May participate in the regulation of cell proliferation through the E2F/RB pathway. May be involved in molecular regulation of hematopoietic stem cells and progenitor cell lineage commitment and differentiation. The sequence is that of Cell division cycle-associated protein 4 (CDCA4) from Homo sapiens (Human).